The following is a 111-amino-acid chain: T cell receptor beta variable 29-1 (111 aa).

Residues 1-16 (MLSLLLLLLGLGSVFS) form the signal peptide. One can recognise an Ig-like domain in the interval 17–111 (AVISQKPSRD…DSSIYLCSVE (95 aa)). Cysteines 38 and 108 form a disulfide. An N-linked (GlcNAc...) asparagine glycan is attached at asparagine 87.

In terms of assembly, alpha-beta TR is a heterodimer composed of an alpha and beta chain; disulfide-linked. The alpha-beta TR is associated with the transmembrane signaling CD3 coreceptor proteins to form the TR-CD3 (TcR or TCR). The assembly of alpha-beta TR heterodimers with CD3 occurs in the endoplasmic reticulum where a single alpha-beta TR heterodimer associates with one CD3D-CD3E heterodimer, one CD3G-CD3E heterodimer and one CD247 homodimer forming a stable octameric structure. CD3D-CD3E and CD3G-CD3E heterodimers preferentially associate with TR alpha and TR beta chains, respectively. The association of the CD247 homodimer is the last step of TcR assembly in the endoplasmic reticulum and is required for transport to the cell surface.

Its subcellular location is the cell membrane. V region of the variable domain of T cell receptor (TR) beta chain that participates in the antigen recognition. Alpha-beta T cell receptors are antigen specific receptors which are essential to the immune response and are present on the cell surface of T lymphocytes. Recognize peptide-major histocompatibility (MH) (pMH) complexes that are displayed by antigen presenting cells (APC), a prerequisite for efficient T cell adaptive immunity against pathogens. Binding of alpha-beta TR to pMH complex initiates TR-CD3 clustering on the cell surface and intracellular activation of LCK that phosphorylates the ITAM motifs of CD3G, CD3D, CD3E and CD247 enabling the recruitment of ZAP70. In turn ZAP70 phosphorylates LAT, which recruits numerous signaling molecules to form the LAT signalosome. The LAT signalosome propagates signal branching to three major signaling pathways, the calcium, the mitogen-activated protein kinase (MAPK) kinase and the nuclear factor NF-kappa-B (NF-kB) pathways, leading to the mobilization of transcription factors that are critical for gene expression and essential for T cell growth and differentiation. The T cell repertoire is generated in the thymus, by V-(D)-J rearrangement. This repertoire is then shaped by intrathymic selection events to generate a peripheral T cell pool of self-MH restricted, non-autoaggressive T cells. Post-thymic interaction of alpha-beta TR with the pMH complexes shapes TR structural and functional avidity. This chain is T cell receptor beta variable 29-1, found in Homo sapiens (Human).